The sequence spans 212 residues: Neuroendocrine protein 7B2 (212 aa).

An N-terminal signal peptide occupies residues 1 to 26 (MVSRMVSTMLSGLLFWLASGWTPAFA). A disulfide bridge connects residues cysteine 120 and cysteine 130. Phosphoserine is present on residues serine 141 and serine 205. Positions 174-212 (GGERRKRRSVNPYLQGQRLDNVVAKKSVPHFSDEDKDPE) are disordered.

This sequence belongs to the 7B2 family. Interacts with PCSK2/PC2 early in the secretory pathway. Dissociation occurs at later stages. In terms of processing, proteolytically cleaved in the Golgi by a furin-like convertase to generate bioactive peptides. Sulfated on tyrosine residues.

The protein localises to the secreted. Functionally, acts as a molecular chaperone for PCSK2/PC2, preventing its premature activation in the regulated secretory pathway. Binds to inactive PCSK2 in the endoplasmic reticulum and facilitates its transport from there to later compartments of the secretory pathway where it is proteolytically matured and activated. Also required for cleavage of PCSK2 but does not appear to be involved in its folding. Plays a role in regulating pituitary hormone secretion. The C-terminal peptide inhibits PCSK2 in vitro. The protein is Neuroendocrine protein 7B2 (SCG5) of Homo sapiens (Human).